The sequence spans 327 residues: Methionyl-tRNA formyltransferase (327 aa).

S113–P116 lines the (6S)-5,6,7,8-tetrahydrofolate pocket.

The protein belongs to the Fmt family.

It catalyses the reaction L-methionyl-tRNA(fMet) + (6R)-10-formyltetrahydrofolate = N-formyl-L-methionyl-tRNA(fMet) + (6S)-5,6,7,8-tetrahydrofolate + H(+). Attaches a formyl group to the free amino group of methionyl-tRNA(fMet). The formyl group appears to play a dual role in the initiator identity of N-formylmethionyl-tRNA by promoting its recognition by IF2 and preventing the misappropriation of this tRNA by the elongation apparatus. The protein is Methionyl-tRNA formyltransferase of Colwellia psychrerythraea (strain 34H / ATCC BAA-681) (Vibrio psychroerythus).